The sequence spans 479 residues: Transcriptional regulator ERG (479 aa).

Positions T34–M47 are enriched in polar residues. 2 disordered regions span residues T34–W56 and P72–K92. 3 positions are modified to phosphoserine: S48, S81, and S96. Positions M113 to P199 constitute a PNT domain. A disordered region spans residues Q242–Y293. Residues T267–P281 are compositionally biased toward polar residues. K282 is covalently cross-linked (Glycyl lysine isopeptide (Lys-Gly) (interchain with G-Cter in SUMO2)). The segment at residues I311 to D391 is a DNA-binding region (ETS).

The protein belongs to the ETS family. As to quaternary structure, identified in a IGF2BP1-dependent mRNP granule complex containing untranslated mRNAs. Interacts with SETDB1.

The protein resides in the nucleus. It is found in the cytoplasm. Its function is as follows. Transcriptional regulator. May participate in transcriptional regulation through the recruitment of SETDB1 histone methyltransferase and subsequent modification of local chromatin structure. In Homo sapiens (Human), this protein is Transcriptional regulator ERG (ERG).